The primary structure comprises 360 residues: Viral protein TPX (360 aa).

Positions 269–289 (TVTPISSPSPTPTPTPTPTPT) are disordered. The stretch at 270 to 291 (VTPISSPSPTPTPTPTPTPTPT) is one Thr-Pro(N) repeat. The segment covering 275 to 289 (SPSPTPTPTPTPTPT) has biased composition (pro residues). A 3 Thr-Pro repeats regions and two near identical repeats region spans residues 278–353 (PTPTPTPTPT…PTPTPTPTPT (76 aa)). A repeat spans 292-301 (YDITYVVFDV). The Thr-Pro(N) repeat unit spans residues 302–322 (TPSPTPTPTLTSTPTPTPTPT). A repeat spans 323 to 332 (YDITYVIFDV). A disordered region spans residues 332 to 360 (VTPSPTPTPTPTPTPTPTPTPTSTTSSNI). The stretch at 333–353 (TPSPTPTPTPTPTPTPTPTPT) is one Thr-Pro(N) repeat. A compositionally biased stretch (pro residues) spans 335-351 (SPTPTPTPTPTPTPTPT).

This chain is Viral protein TPX, found in Thermoproteus tenax (TTV1).